Here is a 200-residue protein sequence, read N- to C-terminus: Holliday junction branch migration complex subunit RuvA (200 aa).

The domain I stretch occupies residues 1-64 (MIGHLRGIIV…EDAHTLYGFH (64 aa)). Positions 65 to 143 (NDHERRLFRA…RWHTNDTPSP (79 aa)) are domain II. The segment at 144-148 (EGLRS) is flexible linker. Positions 149-200 (SNTQPTQDAISALMALGYKPQEAKRAIDAIQKPDLSAETLIRLALKQMVLGT) are domain III.

It belongs to the RuvA family. In terms of assembly, homotetramer. Forms an RuvA(8)-RuvB(12)-Holliday junction (HJ) complex. HJ DNA is sandwiched between 2 RuvA tetramers; dsDNA enters through RuvA and exits via RuvB. An RuvB hexamer assembles on each DNA strand where it exits the tetramer. Each RuvB hexamer is contacted by two RuvA subunits (via domain III) on 2 adjacent RuvB subunits; this complex drives branch migration. In the full resolvosome a probable DNA-RuvA(4)-RuvB(12)-RuvC(2) complex forms which resolves the HJ.

Its subcellular location is the cytoplasm. In terms of biological role, the RuvA-RuvB-RuvC complex processes Holliday junction (HJ) DNA during genetic recombination and DNA repair, while the RuvA-RuvB complex plays an important role in the rescue of blocked DNA replication forks via replication fork reversal (RFR). RuvA specifically binds to HJ cruciform DNA, conferring on it an open structure. The RuvB hexamer acts as an ATP-dependent pump, pulling dsDNA into and through the RuvAB complex. HJ branch migration allows RuvC to scan DNA until it finds its consensus sequence, where it cleaves and resolves the cruciform DNA. This chain is Holliday junction branch migration complex subunit RuvA, found in Coxiella burnetii (strain CbuG_Q212) (Coxiella burnetii (strain Q212)).